Here is a 948-residue protein sequence, read N- to C-terminus: Bifunctional glutamine synthetase adenylyltransferase/adenylyl-removing enzyme (948 aa).

Residues 1–444 (MSLPSALLPT…VFATLIGEED (444 aa)) form an adenylyl removase region. Positions 452–948 (ARHFHELWDM…VIQAWQQWLG (497 aa)) are adenylyl transferase.

Belongs to the GlnE family. It depends on Mg(2+) as a cofactor.

It catalyses the reaction [glutamine synthetase]-O(4)-(5'-adenylyl)-L-tyrosine + phosphate = [glutamine synthetase]-L-tyrosine + ADP. The catalysed reaction is [glutamine synthetase]-L-tyrosine + ATP = [glutamine synthetase]-O(4)-(5'-adenylyl)-L-tyrosine + diphosphate. Functionally, involved in the regulation of glutamine synthetase GlnA, a key enzyme in the process to assimilate ammonia. When cellular nitrogen levels are high, the C-terminal adenylyl transferase (AT) inactivates GlnA by covalent transfer of an adenylyl group from ATP to specific tyrosine residue of GlnA, thus reducing its activity. Conversely, when nitrogen levels are low, the N-terminal adenylyl removase (AR) activates GlnA by removing the adenylyl group by phosphorolysis, increasing its activity. The regulatory region of GlnE binds the signal transduction protein PII (GlnB) which indicates the nitrogen status of the cell. The protein is Bifunctional glutamine synthetase adenylyltransferase/adenylyl-removing enzyme of Vibrio cholerae serotype O1 (strain ATCC 39315 / El Tor Inaba N16961).